The primary structure comprises 166 residues: uncharacterized protein (166 aa).

Gly residues-rich tracts occupy residues 1–10 and 76–86; these read MNYGNNGGGQ and YRGGGGGGGGN. The segment at 1–117 is disordered; that stretch reads MNYGNNGGGQ…GGGNKNFGPI (117 aa).

This is an uncharacterized protein from Caenorhabditis elegans.